A 703-amino-acid polypeptide reads, in one-letter code: Histone-lysine N-methyltransferase SETDB2 (703 aa).

An MBD domain is found at 178–248 (FTKGNPLQLP…DNFSFNNHVR (71 aa)). A Pre-SET domain is found at 310–384 (KCCNCTDGCL…LCQNRVVQHG (75 aa)). C312, C314, C318, C324, C326, C365, C369, C371, and C376 together coordinate Zn(2+). The SET domain maps to 387-678 (LRLQVFKTNT…AGTELTWDYS (292 aa)). An S-adenosyl-L-methionine-binding site is contributed by 397-399 (KGW). The tract at residues 492-588 (TFSPRQARSG…SSSVISGGHP (97 aa)) is disordered. The segment covering 511–525 (RRPKTKTSMLQKRRR) has biased composition (basic residues). Positions 550–560 (PEQKSSAGTKI) are enriched in polar residues. The segment covering 571–586 (SGYVSEESSSSVISGG) has biased composition (low complexity). S-adenosyl-L-methionine-binding positions include R632 and 635–636 (NH). Residues C638, C691, C693, and C698 each contribute to the Zn(2+) site.

It belongs to the class V-like SAM-binding methyltransferase superfamily.

It is found in the nucleus. It localises to the chromosome. The enzyme catalyses N(6),N(6)-dimethyl-L-lysyl(9)-[histone H3] + S-adenosyl-L-methionine = N(6),N(6),N(6)-trimethyl-L-lysyl(9)-[histone H3] + S-adenosyl-L-homocysteine + H(+). Functionally, histone methyltransferase involved in left-right axis specification in early development and mitosis. Specifically trimethylates 'Lys-9' of histone H3 (H3K9me3). H3K9me3 is a specific tag for epigenetic transcriptional repression that recruits HP1 (CBX1, CBX3 and/or CBX5) proteins to methylated histones. Contributes to H3K9me3 in both the interspersed repetitive elements and centromere-associated repeats. Plays a role in chromosome condensation and segregation during mitosis. This chain is Histone-lysine N-methyltransferase SETDB2 (setdb2), found in Xenopus laevis (African clawed frog).